Consider the following 1588-residue polypeptide: Pentafunctional AROM polypeptide (1588 aa).

The segment at 1-392 (MVQLAKVPIL…YGDSAQFVSD (392 aa)) is 3-dehydroquinate synthase. NAD(+)-binding positions include 43–45 (DTN), 78–81 (ETSK), 109–111 (GGV), and Asp114. Residue Arg125 participates in 7-phospho-2-dehydro-3-deoxy-D-arabino-heptonate binding. 134–135 (TS) lines the NAD(+) pocket. Residues Asp141 and Lys147 each coordinate 7-phospho-2-dehydro-3-deoxy-D-arabino-heptonate. Position 156 (Lys156) interacts with NAD(+). Asn157 contributes to the 7-phospho-2-dehydro-3-deoxy-D-arabino-heptonate binding site. NAD(+) contacts are provided by residues 174-177 (WLET) and Asn185. Position 189 (Glu189) interacts with Zn(2+). 7-phospho-2-dehydro-3-deoxy-D-arabino-heptonate-binding positions include 189–192 (EVIK) and Lys258. Glu268 serves as the catalytic Proton acceptor; for 3-dehydroquinate synthase activity. 7-phospho-2-dehydro-3-deoxy-D-arabino-heptonate is bound by residues 272-276 (RNLLN) and His279. His279 contacts Zn(2+). His283 acts as the Proton acceptor; for 3-dehydroquinate synthase activity in catalysis. The 7-phospho-2-dehydro-3-deoxy-D-arabino-heptonate site is built by His295 and Lys364. His295 is a Zn(2+) binding site. Residues 405 to 871 (VYPFKDIPAD…WDVLHSELGA (467 aa)) form an EPSP synthase region. Cys853 functions as the For EPSP synthase activity in the catalytic mechanism. The interval 890 to 1080 (SVVIIGMRAA…IPSGRSAFVC (191 aa)) is shikimate kinase. ATP is bound at residue 895–902 (GMRAAGKT). The interval 1081 to 1293 (LTFDDLTEQT…AAPGQLTVAQ (213 aa)) is 3-dehydroquinase. The active-site Proton acceptor; for 3-dehydroquinate dehydratase activity is the His1198. Catalysis depends on Lys1227, which acts as the Schiff-base intermediate with substrate; for 3-dehydroquinate dehydratase activity. The interval 1306-1588 (PKELFVVGKP…KAIFDAVTKE (283 aa)) is shikimate dehydrogenase.

The protein in the N-terminal section; belongs to the sugar phosphate cyclases superfamily. Dehydroquinate synthase family. This sequence in the 2nd section; belongs to the EPSP synthase family. In the 3rd section; belongs to the shikimate kinase family. It in the 4th section; belongs to the type-I 3-dehydroquinase family. The protein in the C-terminal section; belongs to the shikimate dehydrogenase family. Homodimer. Requires Zn(2+) as cofactor.

The protein resides in the cytoplasm. It catalyses the reaction 7-phospho-2-dehydro-3-deoxy-D-arabino-heptonate = 3-dehydroquinate + phosphate. The catalysed reaction is 3-dehydroquinate = 3-dehydroshikimate + H2O. It carries out the reaction shikimate + NADP(+) = 3-dehydroshikimate + NADPH + H(+). The enzyme catalyses shikimate + ATP = 3-phosphoshikimate + ADP + H(+). It catalyses the reaction 3-phosphoshikimate + phosphoenolpyruvate = 5-O-(1-carboxyvinyl)-3-phosphoshikimate + phosphate. It functions in the pathway metabolic intermediate biosynthesis; chorismate biosynthesis; chorismate from D-erythrose 4-phosphate and phosphoenolpyruvate: step 2/7. Its pathway is metabolic intermediate biosynthesis; chorismate biosynthesis; chorismate from D-erythrose 4-phosphate and phosphoenolpyruvate: step 3/7. It participates in metabolic intermediate biosynthesis; chorismate biosynthesis; chorismate from D-erythrose 4-phosphate and phosphoenolpyruvate: step 4/7. The protein operates within metabolic intermediate biosynthesis; chorismate biosynthesis; chorismate from D-erythrose 4-phosphate and phosphoenolpyruvate: step 5/7. It functions in the pathway metabolic intermediate biosynthesis; chorismate biosynthesis; chorismate from D-erythrose 4-phosphate and phosphoenolpyruvate: step 6/7. The AROM polypeptide catalyzes 5 consecutive enzymatic reactions in prechorismate polyaromatic amino acid biosynthesis. This chain is Pentafunctional AROM polypeptide, found in Saccharomyces cerevisiae (strain Lalvin EC1118 / Prise de mousse) (Baker's yeast).